We begin with the raw amino-acid sequence, 265 residues long: MEVLKRENPLIHMITNYVTVNDLAQVTINYGGLPLMATHHDELKEITKMANGLLVNIGTLEPYQMESSMISMKIAKEKGIPSVLDPVGVQASKLRKDFAKKLILEGEPSLIKGNLAEIKTLIGETSNSIGIDSFDDSLSENTKNKIKEYARERNLIVVVSGVVDFITNGEESASVKNGTYKMSKITGTGCMLGALLTLALSFYDHKDLRFKEVVKAVSTWGICGELAEERLREKEGLMTFKHNLLDELSIINDETIKEREKVIYD.

Position 36 (Met-36) interacts with substrate. ATP contacts are provided by Lys-112 and Ser-160. Gly-187 is a binding site for substrate.

The protein belongs to the Thz kinase family. Requires Mg(2+) as cofactor.

It carries out the reaction 5-(2-hydroxyethyl)-4-methylthiazole + ATP = 4-methyl-5-(2-phosphooxyethyl)-thiazole + ADP + H(+). Its pathway is cofactor biosynthesis; thiamine diphosphate biosynthesis; 4-methyl-5-(2-phosphoethyl)-thiazole from 5-(2-hydroxyethyl)-4-methylthiazole: step 1/1. Its function is as follows. Catalyzes the phosphorylation of the hydroxyl group of 4-methyl-5-beta-hydroxyethylthiazole (THZ). The polypeptide is Hydroxyethylthiazole kinase (Clostridium perfringens (strain ATCC 13124 / DSM 756 / JCM 1290 / NCIMB 6125 / NCTC 8237 / Type A)).